Here is a 39-residue protein sequence, read N- to C-terminus: Photosystem II reaction center protein L (39 aa).

Residues 18 to 38 (SLYLGLLLVFVLGILFSSYFF) traverse the membrane as a helical segment.

This sequence belongs to the PsbL family. PSII is composed of 1 copy each of membrane proteins PsbA, PsbB, PsbC, PsbD, PsbE, PsbF, PsbH, PsbI, PsbJ, PsbK, PsbL, PsbM, PsbT, PsbX, PsbY, Psb30/Ycf12, peripheral proteins PsbO, CyanoQ (PsbQ), PsbU, PsbV and a large number of cofactors. It forms dimeric complexes.

The protein resides in the cellular thylakoid membrane. Functionally, one of the components of the core complex of photosystem II (PSII). PSII is a light-driven water:plastoquinone oxidoreductase that uses light energy to abstract electrons from H(2)O, generating O(2) and a proton gradient subsequently used for ATP formation. It consists of a core antenna complex that captures photons, and an electron transfer chain that converts photonic excitation into a charge separation. This subunit is found at the monomer-monomer interface and is required for correct PSII assembly and/or dimerization. The chain is Photosystem II reaction center protein L from Prochlorococcus marinus (strain SARG / CCMP1375 / SS120).